Consider the following 623-residue polypeptide: F-box protein FBX14 (623 aa).

The interval 18–48 (LNLNPPCSSSSSSSSAATFTNKSRNFKSSPP) is disordered. A compositionally biased stretch (polar residues) spans 33-45 (AATFTNKSRNFKS). The 44-residue stretch at 54–97 (VLENVLENVLQFLTSRCDRNAVSLVCRSWYRVEAQTRLEVFIGN) folds into the F-box domain. Lys119 serves as a coordination point for 1D-myo-inositol hexakisphosphate. Residues 126-127 (DF) form an interaction with auxin-responsive proteins region. 1D-myo-inositol hexakisphosphate-binding positions include 158 to 159 (KR) and Arg391. Positions 394-399 (PFDPRE) are interaction with auxin-responsive proteins. Residue 447-449 (VFR) participates in 1D-myo-inositol hexakisphosphate binding. The tract at residues 451–455 (CIMGR) is interaction with auxin-responsive proteins. Arg482 contacts 1D-myo-inositol hexakisphosphate. Residues 510-511 (AF) are interaction with auxin-responsive proteins. Residues 530–531 (QK) and Arg555 each bind 1D-myo-inositol hexakisphosphate.

As to quaternary structure, part of a SCF (SKP1-cullin-F-box) protein ligase complex. May interact with auxin and auxin-responsive proteins.

The protein resides in the nucleus. It participates in protein modification; protein ubiquitination. This is F-box protein FBX14 (FBX14) from Arabidopsis thaliana (Mouse-ear cress).